The following is a 97-amino-acid chain: Osteocalcin (97 aa).

Residues 1 to 20 (MKAAALLLLAALLTFSLCRS) form the signal peptide. A propeptide spanning residues 21–48 (APDGSDARSAKAFISHRQRAEMVRRQKR) is cleaved from the precursor. The region spanning 49-95 (HYAQDSGVAGAPPNPLEAQREVCELSPDCDELADQIGFQEAYRRFYG) is the Gla domain. Positions 65, 69, 72, and 78 each coordinate Ca(2+). Residues glutamate 65, glutamate 69, and glutamate 72 each carry the 4-carboxyglutamate modification. Cysteine 71 and cysteine 77 are joined by a disulfide.

Belongs to the osteocalcin/matrix Gla protein family. Gamma-carboxyglutamate residues are formed by vitamin K dependent carboxylation by GGCX. These residues are essential for the binding of calcium.

It is found in the secreted. Functionally, the carboxylated form is one of the main organic components of the bone matrix, which constitutes 1-2% of the total bone protein. The carboxylated form binds strongly to apatite and calcium. The polypeptide is Osteocalcin (BGLAP) (Gallus gallus (Chicken)).